We begin with the raw amino-acid sequence, 287 residues long: Prohibitin-1 (287 aa).

Residues 102–116 are interaction with ATG8; sequence VLQLPAIYQNLGLDY. The AIM motif lies at 109 to 112; sequence YQNL. The stretch at 180–224 forms a coiled coil; it reads EFTKAVEQKQIAQQDAERAKFLVEKAEQERQASVIRAEGEAESAE. The segment at 264–287 is disordered; it reads SQHSGGGNSESSGSPNSLLLNIGR. Over residues 272–287 the composition is skewed to low complexity; the sequence is SESSGSPNSLLLNIGR.

This sequence belongs to the prohibitin family. As to quaternary structure, the mitochondrial prohibitin complex consists of two subunits (PHB1 and PHB2). The subunits assemble into a membrane-associated ring-shaped supercomplex of approximately 1 mDa. The mitochondrial prohibitin complex interacts with the m-AAA protease, a heterohexamer composed of YTA12/RCA1 and YTA10/AFG3. The mitochondrial prohibitin complex interacts with ATG8 and the interaction may support mitophagosome assembly. The N-terminus is blocked.

Its subcellular location is the mitochondrion inner membrane. Its function is as follows. Prohibitin probably acts as a holdase/unfoldase for the stabilization of newly synthesized mitochondrial proteins. Involved in mitophagy; may act as an adapter for ATG8 that supports mitophagosome assembly. Negatively regulates the proteolytic processing of ATG32 via the i-AAA protease. Acts as a negative regulator of the m-AAA protease. The sequence is that of Prohibitin-1 (PHB1) from Saccharomyces cerevisiae (strain ATCC 204508 / S288c) (Baker's yeast).